The sequence spans 226 residues: Enolase-phosphatase E1 (226 aa).

The protein belongs to the HAD-like hydrolase superfamily. MasA/MtnC family. Monomer. The cofactor is Mg(2+).

The enzyme catalyses 5-methylsulfanyl-2,3-dioxopentyl phosphate + H2O = 1,2-dihydroxy-5-(methylsulfanyl)pent-1-en-3-one + phosphate. It functions in the pathway amino-acid biosynthesis; L-methionine biosynthesis via salvage pathway; L-methionine from S-methyl-5-thio-alpha-D-ribose 1-phosphate: step 3/6. Its pathway is amino-acid biosynthesis; L-methionine biosynthesis via salvage pathway; L-methionine from S-methyl-5-thio-alpha-D-ribose 1-phosphate: step 4/6. Functionally, bifunctional enzyme that catalyzes the enolization of 2,3-diketo-5-methylthiopentyl-1-phosphate (DK-MTP-1-P) into the intermediate 2-hydroxy-3-keto-5-methylthiopentenyl-1-phosphate (HK-MTPenyl-1-P), which is then dephosphorylated to form the acireductone 1,2-dihydroxy-3-keto-5-methylthiopentene (DHK-MTPene). The chain is Enolase-phosphatase E1 from Alcanivorax borkumensis (strain ATCC 700651 / DSM 11573 / NCIMB 13689 / SK2).